The primary structure comprises 267 residues: Phosphate import ATP-binding protein PstB (267 aa).

Residues 12–251 (VSLDNVSIRY…EFDKTKNMFN (240 aa)) form the ABC transporter domain. ATP is bound at residue 44-51 (GPSGCGKS).

The protein belongs to the ABC transporter superfamily. Phosphate importer (TC 3.A.1.7) family. The complex is composed of two ATP-binding proteins (PstB), two transmembrane proteins (PstC and PstA) and a solute-binding protein (PstS).

The protein resides in the cell inner membrane. It catalyses the reaction phosphate(out) + ATP + H2O = ADP + 2 phosphate(in) + H(+). Part of the ABC transporter complex PstSACB involved in phosphate import. Responsible for energy coupling to the transport system. The sequence is that of Phosphate import ATP-binding protein PstB from Prochlorococcus marinus (strain NATL2A).